Here is a 214-residue protein sequence, read N- to C-terminus: Scytalone dehydratase-like protein mdpB (214 aa).

Substrate-binding residues include Tyr-40 and Tyr-60. Catalysis depends on residues His-95 and His-120.

The protein belongs to the scytalone dehydratase family.

Its pathway is secondary metabolite biosynthesis. Scytalone dehydratase-like protein; part of the gene cluster that mediates the biosynthesis of monodictyphenone, a prenyl xanthone derivative. The pathway begins with the synthesis of atrochrysone thioester by the polyketide synthase (PKS) mdpG. The atrochrysone carboxyl ACP thioesterase mdpF then breaks the thioester bond and releases the atrochrysone carboxylic acid from mdpG. The atrochrysone carboxylic acid is then converted to atrochrysone which is further transformed into emodin anthrone. The next step is performed by the anthrone oxygenase mdpH that catalyzes the oxidation of emodinanthrone to emodin. Emodin is further modified to yield monodictyphenone via several steps involving mdpB, mdpC mdpJ, mdpK and mdpL. These enzymes with xptA, xptB and xptC are also proposed to be involved in the synthesis of shamixanthone from emodin. Especially, direct reduction of emodin by the short chain dehydrogenase mdpC followed by dehydration catalyzed by the scytalone dehydratase-like protein mdpB gives loss of oxygen and formation of chrysophanol intermediate in two simple steps. This Emericella nidulans (strain FGSC A4 / ATCC 38163 / CBS 112.46 / NRRL 194 / M139) (Aspergillus nidulans) protein is Scytalone dehydratase-like protein mdpB.